The sequence spans 885 residues: Leucine--tRNA ligase (885 aa).

Positions 48–58 (PYPSGKLHMGH) match the 'HIGH' region motif. Residues 639–643 (TMSKS) carry the 'KMSKS' region motif. ATP is bound at residue lysine 642.

The protein belongs to the class-I aminoacyl-tRNA synthetase family.

It is found in the cytoplasm. The enzyme catalyses tRNA(Leu) + L-leucine + ATP = L-leucyl-tRNA(Leu) + AMP + diphosphate. The polypeptide is Leucine--tRNA ligase (Bordetella pertussis (strain Tohama I / ATCC BAA-589 / NCTC 13251)).